The following is a 512-amino-acid chain: Pantetheinase (512 aa).

Positions 1–23 (MGMSWWLACAAAFSALCVLKASS) are cleaved as a signal peptide. One can recognise a CN hydrolase domain in the interval 32 to 308 (YEHAVILPKD…GKLLFAQLKS (277 aa)). The Proton acceptor role is filled by Glu-81. N-linked (GlcNAc...) asparagine glycans are attached at residues Asn-132 and Asn-148. Lys-180 serves as the catalytic Proton donor. Cys-213 functions as the Nucleophile in the catalytic mechanism. 2 N-linked (GlcNAc...) asparagine glycosylation sites follow: Asn-316 and Asn-354. A lipid anchor (GPI-anchor amidated asparagine) is attached at Asn-488. A propeptide spans 489 to 512 (ASSDFIAHSLIIMLIVTPIIHYLC) (removed in mature form).

Belongs to the carbon-nitrogen hydrolase superfamily. BTD/VNN family. Monomer. N-glycosylated. Detected in kidney (at protein level). Ubiquitous.

The protein resides in the cell membrane. The enzyme catalyses (R)-pantetheine + H2O = cysteamine + (R)-pantothenate. Amidohydrolase that hydrolyzes specifically one of the carboamide linkages in D-pantetheine thus recycling pantothenic acid (vitamin B5) and releasing cysteamine. The protein is Pantetheinase (Vnn1) of Mus musculus (Mouse).